Reading from the N-terminus, the 326-residue chain is Probable cell division protein WhiA (326 aa).

Positions 275–308 (SLDELGHHADPPMTKDAVAGRIRRLLAMADKKAV) form a DNA-binding region, H-T-H motif.

It belongs to the WhiA family.

In terms of biological role, involved in cell division and chromosome segregation. The polypeptide is Probable cell division protein WhiA (Clavibacter sepedonicus (Clavibacter michiganensis subsp. sepedonicus)).